Reading from the N-terminus, the 59-residue chain is Large ribosomal subunit protein uL30 (59 aa).

Belongs to the universal ribosomal protein uL30 family. As to quaternary structure, part of the 50S ribosomal subunit.

This is Large ribosomal subunit protein uL30 from Clostridium botulinum (strain Alaska E43 / Type E3).